We begin with the raw amino-acid sequence, 577 residues long: Sulfite reductase [NADPH] hemoprotein beta-component (577 aa).

Positions 441, 447, 486, and 490 each coordinate [4Fe-4S] cluster. Siroheme is bound at residue Cys490.

This sequence belongs to the nitrite and sulfite reductase 4Fe-4S domain family. In terms of assembly, alpha(8)-beta(8). The alpha component is a flavoprotein, the beta component is a hemoprotein. It depends on siroheme as a cofactor. [4Fe-4S] cluster serves as cofactor.

It catalyses the reaction hydrogen sulfide + 3 NADP(+) + 3 H2O = sulfite + 3 NADPH + 4 H(+). It participates in sulfur metabolism; hydrogen sulfide biosynthesis; hydrogen sulfide from sulfite (NADPH route): step 1/1. In terms of biological role, component of the sulfite reductase complex that catalyzes the 6-electron reduction of sulfite to sulfide. This is one of several activities required for the biosynthesis of L-cysteine from sulfate. The protein is Sulfite reductase [NADPH] hemoprotein beta-component of Pectobacterium atrosepticum (strain SCRI 1043 / ATCC BAA-672) (Erwinia carotovora subsp. atroseptica).